Reading from the N-terminus, the 305-residue chain is Acetaldehyde dehydrogenase (305 aa).

13 to 16 contributes to the NAD(+) binding site; that stretch reads SGNI. Cysteine 128 functions as the Acyl-thioester intermediate in the catalytic mechanism. NAD(+) is bound by residues 159–167 and asparagine 278; that span reads SAGPGTRQN.

The protein belongs to the acetaldehyde dehydrogenase family.

The enzyme catalyses acetaldehyde + NAD(+) + CoA = acetyl-CoA + NADH + H(+). The protein is Acetaldehyde dehydrogenase of Roseiflexus sp. (strain RS-1).